A 179-amino-acid polypeptide reads, in one-letter code: Replication restart protein DnaT (179 aa).

The tract at residues 156–179 (GGLPKRDVNTVSEPDSQIPPGFRG) is disordered.

It belongs to the DnaT family. In terms of assembly, homooligomerizes. Interacts with PriB. Component of the replication restart primosome. Primosome assembly occurs via a 'hand-off' mechanism. PriA binds to replication forks, subsequently PriB then DnaT bind; DnaT then displaces ssDNA to generate the helicase loading substrate.

Functionally, involved in the restart of stalled replication forks, which reloads the replicative helicase on sites other than the origin of replication. Can function in multiple replication restart pathways. Displaces ssDNA from a PriB-ssDNA complex. Probably forms a spiral filament on ssDNA. The protein is Replication restart protein DnaT of Escherichia coli O1:K1 / APEC.